The sequence spans 360 residues: Peptide chain release factor 1 (360 aa).

Glutamine 235 is modified (N5-methylglutamine). Residues 281 to 310 (AERQRQDAAQAESRRLQVGSGDRSQRIRTY) form a disordered region.

This sequence belongs to the prokaryotic/mitochondrial release factor family. In terms of processing, methylated by PrmC. Methylation increases the termination efficiency of RF1.

The protein resides in the cytoplasm. Functionally, peptide chain release factor 1 directs the termination of translation in response to the peptide chain termination codons UAG and UAA. In Stenotrophomonas maltophilia (strain K279a), this protein is Peptide chain release factor 1.